Consider the following 193-residue polypeptide: Cbp/p300-interacting transactivator 1 (193 aa).

Disordered regions lie at residues 1–26 (MPTT…NQEM), 50–88 (VASN…LHPA), and 106–147 (GMAA…SPAI). A compositionally biased stretch (low complexity) spans 54-73 (GTKASGAPTSSSGSPIGSPT). A Nuclear export signal motif is present at residues 158 to 167 (LMSLVVELGL).

Belongs to the CITED family. In terms of assembly, interacts (via C-terminus) with CREBBP. Interacts with EGR2. Homodimer. Binds to RBM14. Interacts (via N-terminus) with HSPA8; the interaction suppresses the association of CITED1 with p300/CBP and SMAD-mediated transcription transactivation. Interacts (via C-terminus) with TOX3 (via HGM box); the interaction increases estrogen-response element (ERE)-dependent transcription and protection against cell death. Interacts with ESR1; the interaction occurs in a estrogen-dependent manner. Interacts (unphosphorylated form preferentially and via C-terminus) with EP300. In terms of processing, phosphorylated. Phosphorylation changes in a cell cycle-dependent manner and reduces its transcriptional coactivator activity. Expressed only in melanocytes and testis.

Its subcellular location is the nucleus. It localises to the cytoplasm. Functionally, transcriptional coactivator of the p300/CBP-mediated transcription complex. Enhances SMAD-mediated transcription by strengthening the functional link between the DNA-binding SMAD transcription factors and the p300/CBP transcription coactivator complex. Stimulates estrogen-dependent transactivation activity mediated by estrogen receptors signaling; stabilizes the interaction of estrogen receptor ESR1 and histone acetyltransferase EP300. Positively regulates TGF-beta signaling through its association with the SMAD/p300/CBP-mediated transcriptional coactivator complex. Induces transcription from estrogen-responsive promoters and protection against cell death. Potentiates EGR2-mediated transcriptional activation activity from the ERBB2 promoter. Acts as an inhibitor of osteoblastic mineralization through a cAMP-dependent parathyroid hormone receptor signaling. May play a role in pigmentation of melanocytes. Associates with chromatin to the estrogen-responsive TGF-alpha promoter region in a estrogen-dependent manner. This chain is Cbp/p300-interacting transactivator 1 (CITED1), found in Homo sapiens (Human).